A 151-amino-acid polypeptide reads, in one-letter code: Gametocyte-specific factor 1-like (151 aa).

2 consecutive CHHC U11-48K-type zinc fingers follow at residues isoleucine 6 to asparagine 33 and methionine 40 to serine 67. Residues cysteine 9, histidine 15, histidine 25, cysteine 29, cysteine 43, histidine 49, histidine 59, and cysteine 63 each contribute to the Zn(2+) site. Positions glutamine 130–phenylalanine 151 are disordered.

This sequence belongs to the UPF0224 (FAM112) family.

The sequence is that of Gametocyte-specific factor 1-like (Gtsf1l) from Mus musculus (Mouse).